The primary structure comprises 575 residues: 3-hydroxy-3-methylglutaryl-coenzyme A reductase 1 (575 aa).

Positions 1 to 13 (MDTTGRLHHRKHA) are enriched in basic residues. The interval 1–25 (MDTTGRLHHRKHATPVEDRSPTTPK) is disordered. A run of 2 helical transmembrane segments spans residues 29 to 49 (ALPL…FSVA) and 73 to 93 (EIVA…FFGI). The tract at residues 97–160 (QSFIARASHD…PLIAPLVSEE (64 aa)) is linker. Residue Asn132 is glycosylated (N-linked (GlcNAc...) asparagine). Positions 161-575 (DEMIVNSVVD…SSKDMSKAAS (415 aa)) are catalytic. The Charge relay system role is filled by Glu254. N-linked (GlcNAc...) asparagine glycosylation is present at Asn318. Catalysis depends on charge relay system residues Lys386 and Asp462. The chain crosses the membrane as a helical span at residues 531–551 (LLAAIVAGSVLAGELSLMSAI). His560 (proton donor) is an active-site residue. An N-linked (GlcNAc...) asparagine glycan is attached at Asn564.

It belongs to the HMG-CoA reductase family.

The protein localises to the endoplasmic reticulum membrane. It localises to the mitochondrion membrane. It is found in the plastid membrane. It carries out the reaction (R)-mevalonate + 2 NADP(+) + CoA = (3S)-3-hydroxy-3-methylglutaryl-CoA + 2 NADPH + 2 H(+). The protein operates within metabolic intermediate biosynthesis; (R)-mevalonate biosynthesis; (R)-mevalonate from acetyl-CoA: step 3/3. Functionally, catalyzes the synthesis of mevalonate. The specific precursor of all isoprenoid compounds present in plants. The sequence is that of 3-hydroxy-3-methylglutaryl-coenzyme A reductase 1 (HMGR1) from Hevea brasiliensis (Para rubber tree).